Here is a 789-residue protein sequence, read N- to C-terminus: Phenylalanine--tRNA ligase beta subunit (789 aa).

Positions 39–149 (ADGLEAFRIA…HEAPVGQSYV (111 aa)) constitute a tRNA-binding domain. The region spanning 399–471 (SAVPVISYDP…RIEGLDNVPS (73 aa)) is the B5 domain. Residues Asp-449, Asp-455, and Asp-459 each contribute to the Mg(2+) site. In terms of domain architecture, FDX-ACB spans 696 to 788 (SMLQPVFRDF…AAAKKGARLR (93 aa)).

The protein belongs to the phenylalanyl-tRNA synthetase beta subunit family. Type 1 subfamily. As to quaternary structure, tetramer of two alpha and two beta subunits. The cofactor is Mg(2+).

The protein resides in the cytoplasm. The enzyme catalyses tRNA(Phe) + L-phenylalanine + ATP = L-phenylalanyl-tRNA(Phe) + AMP + diphosphate + H(+). The sequence is that of Phenylalanine--tRNA ligase beta subunit from Zymomonas mobilis subsp. mobilis (strain ATCC 31821 / ZM4 / CP4).